The primary structure comprises 401 residues: Rab-interacting lysosomal protein (401 aa).

Positions 11 to 101 (PGWGSREAAG…REENERLRRE (91 aa)) constitute an RH1 domain. Positions 75–181 (DSLQVSAQPA…AQDRERERQQ (107 aa)) form a coiled coil. 2 disordered regions span residues 167–239 (TQLR…SEAG) and 304–388 (KMLG…SALH). Residues 172-181 (AQDRERERQQ) show a composition bias toward basic and acidic residues. Positions 240-316 (QCRFSREEFE…GTPEEAESSE (77 aa)) constitute an RH2 domain. The segment at 272 to 333 (FQRELLTDHR…LLSDDKGDHP (62 aa)) is necessary for interaction with RAB7A and RAB34, lysosomal distribution and morphology. At threonine 308 the chain carries Phosphothreonine. Residues 310 to 319 (EEAESSEDEA) show a composition bias toward acidic residues. Phosphoserine is present on residues serine 314 and serine 315.

Homodimer. Interacts with RAB7A. Interacts with RAB34. Identified in a complex with MREG and DCTN1; interacts directly with MREG. Interacts with CLN3. Interacts with FLCN; the interaction is direct and promotes association between RILP and RAB34. In terms of tissue distribution, ubiquitous. Strongly expressed in fetal heart, heart, stomach, spleen, adrenal gland, thyroid gland, salivary gland, fetal liver, liver and lung. Poorly expressed in brain.

The protein resides in the late endosome membrane. The protein localises to the lysosome membrane. It localises to the cytoplasmic vesicle. Its subcellular location is the phagosome membrane. In terms of biological role, rab effector playing a role in late endocytic transport to degradative compartments. Involved in the regulation of lysosomal morphology and distribution. Induces recruitment of dynein-dynactin motor complexes to Rab7A-containing late endosome and lysosome compartments. Promotes centripetal migration of phagosomes and the fusion of phagosomes with the late endosomes and lysosomes. The polypeptide is Rab-interacting lysosomal protein (RILP) (Homo sapiens (Human)).